A 349-amino-acid chain; its full sequence is PDZ and LIM domain protein 2 (349 aa).

The PDZ domain maps to 1–84; that stretch reads MALTVDVAGP…PLRLQLDRSQ (84 aa). The tract at residues 74-147 is disordered; sequence SPLRLQLDRS…TPPPTSPVAL (74 aa). The span at 81–94 shows a compositional bias: polar residues; that stretch reads DRSQTASPGQTNGE. Phosphoserine occurs at positions 124, 127, 129, 134, and 137. Phosphothreonine is present on residues Thr138 and Thr142. 2 positions are modified to phosphoserine: Ser143 and Ser163. The segment at 169–212 is disordered; it reads AHHLTYPGHPTSQQAGHSSPSDSAVRVLLHSPGRPSSPRFSSLD. Residues 178–190 are compositionally biased toward polar residues; sequence PTSQQAGHSSPSD. 6 positions are modified to phosphoserine: Ser199, Ser204, Ser205, Ser209, Ser210, and Ser263. The segment covering 199–210 has biased composition (low complexity); the sequence is SPGRPSSPRFSS. One can recognise an LIM zinc-binding domain in the interval 281–341; that stretch reads HTCEKCSVNI…EKHARQRYSM (61 aa).

Interacts with alpha-actinins ACTN1 and ACTN4, FLNA and MYH9. Interacts (via LIM zinc-binding domain) with MKRN2. As to expression, highly expressed in lung. Expressed at intermediate level in kidney, testis and spleen. Weakly expressed in heart and brain.

Its subcellular location is the cytoplasm. It localises to the cytoskeleton. In terms of biological role, probable adapter protein located at the actin cytoskeleton that promotes cell attachment. Necessary for the migratory capacity of epithelial cells. Overexpression enhances cell adhesion to collagen and fibronectin and suppresses anchorage independent growth. May contribute to tumor cell migratory capacity. The sequence is that of PDZ and LIM domain protein 2 (Pdlim2) from Mus musculus (Mouse).